The primary structure comprises 209 residues: Large ribosomal subunit protein uL3 (209 aa).

Positions 127–151 (SGGPSSHGSKFHRHLGGTGQATTPA) are disordered.

It belongs to the universal ribosomal protein uL3 family. In terms of assembly, part of the 50S ribosomal subunit. Forms a cluster with proteins L14 and L19.

Functionally, one of the primary rRNA binding proteins, it binds directly near the 3'-end of the 23S rRNA, where it nucleates assembly of the 50S subunit. The sequence is that of Large ribosomal subunit protein uL3 from Borrelia turicatae (strain 91E135).